We begin with the raw amino-acid sequence, 773 residues long: MSTTHVLGYPRIGARRELKRATEAYWKGEIDQAELERTGRELRARHWQAQRDAGLDWVTVGDFAFYDHVLNVSALLGAVPPRFGDAGETVDLDTTFRMARGRAPTGEPAAACEMTKYFDTNYHYLVPELHADQRFGLASRRLFDEVAEARAAGHPVKVVLTGPLTWLWLGKAKSPGLDRLDLLDGVVDVYGEILQQLGEQGVEWVQLDEPALVQDLPADWQQAYERAYHRLQAGPVKLLLATYFGGLGENLSTALNLPVDGIHIDCVRDPDQLTAVLDRLLPHKVLSLGVIDGRNVWRSDLAALARTLAPVRERLGERLWLAPSCSLLHVPVDLDLETELQPQLRRWLAFARQKLDELVVLGRLLGDRAGAADEQAAAEASAALADRQASTHIHKAEVAERMQRVGPADRQRGQPYPERARKQRKRLALPLFPTTTIGSFPQTAEIRAARRDLKAGRLTPEAYEARMREEIAFAVARQEEIGLDVLVHGEAERNDMVEYFGEQLDGFAFTRAGWVQSYGSRCVKPPIIYGDVSRPRPMTVRWSEYAQSLTGRPMKGMLTGPVTVLQWSFVRDDQPRSETCRQIALALRDEVADLEAAGIPAIQIDEPALREGLPLQQRQWPGYLDWAVDCFRLTASVAQDATQIHTHMCYSEFNDIMGAIATLDADVITIETSRSDMELLEVFEGFEYPNEIGPGVYDIHSPNTPSVDWMVRLMEKAARRIPVERLWVNPDCGLKTRAWAEVEPALQNMVAAAEILRERYGQAQTRVATQGKR.

5-methyltetrahydropteroyltri-L-glutamate contacts are provided by residues 16–19 (RELK) and lysine 116. L-homocysteine is bound by residues 437 to 439 (IGS) and glutamate 490. L-methionine is bound by residues 437–439 (IGS) and glutamate 490. 5-methyltetrahydropteroyltri-L-glutamate is bound by residues 521-522 (RC) and tryptophan 567. An L-homocysteine-binding site is contributed by aspartate 605. Aspartate 605 provides a ligand contact to L-methionine. Glutamate 611 contacts 5-methyltetrahydropteroyltri-L-glutamate. Residues histidine 647, cysteine 649, and glutamate 671 each coordinate Zn(2+). The Proton donor role is filled by histidine 700. Residue cysteine 732 coordinates Zn(2+).

Belongs to the vitamin-B12 independent methionine synthase family. Requires Zn(2+) as cofactor.

It carries out the reaction 5-methyltetrahydropteroyltri-L-glutamate + L-homocysteine = tetrahydropteroyltri-L-glutamate + L-methionine. The protein operates within amino-acid biosynthesis; L-methionine biosynthesis via de novo pathway; L-methionine from L-homocysteine (MetE route): step 1/1. Catalyzes the transfer of a methyl group from 5-methyltetrahydrofolate to homocysteine resulting in methionine formation. This is 5-methyltetrahydropteroyltriglutamate--homocysteine methyltransferase from Alkalilimnicola ehrlichii (strain ATCC BAA-1101 / DSM 17681 / MLHE-1).